A 429-amino-acid chain; its full sequence is Phosphoribosylamine--glycine ligase (429 aa).

The region spanning 109–316 (KDFLARHKIP…LVELCLKACD (208 aa)) is the ATP-grasp domain. Residue 135 to 196 (LREKGTPIVV…EEFLDGEEAS (62 aa)) coordinates ATP. Residues Glu-286 and Asn-288 each coordinate Mg(2+).

Belongs to the GARS family. The cofactor is Mg(2+). Requires Mn(2+) as cofactor.

It catalyses the reaction 5-phospho-beta-D-ribosylamine + glycine + ATP = N(1)-(5-phospho-beta-D-ribosyl)glycinamide + ADP + phosphate + H(+). Its pathway is purine metabolism; IMP biosynthesis via de novo pathway; N(1)-(5-phospho-D-ribosyl)glycinamide from 5-phospho-alpha-D-ribose 1-diphosphate: step 2/2. This is Phosphoribosylamine--glycine ligase from Haemophilus influenzae (strain ATCC 51907 / DSM 11121 / KW20 / Rd).